A 399-amino-acid polypeptide reads, in one-letter code: Leu/Ile/Val-binding protein homolog 7 (399 aa).

Positions 1–22 are cleaved as a signal peptide; that stretch reads MEKHLIALSVAALQAGAAPASA.

Belongs to the leucine-binding protein family.

Functionally, component of an amino-acid transport system. The protein is Leu/Ile/Val-binding protein homolog 7 of Brucella abortus (strain 2308).